A 710-amino-acid chain; its full sequence is PC3-like endoprotease variant B (710 aa).

The N-terminal stretch at 1 to 29 is a signal peptide; sequence MNYRGIYRRRYVFVLLLLVAVVNISYGWT. Residues Asn23, Asn62, and Asn190 are each glycosylated (N-linked (GlcNAc...) asparagine). The propeptide occupies 30–152; that stretch reads VLKNKDYKRR…QQKILERVKR (123 aa). The 323-residue stretch at 164-486 folds into the Peptidase S8 domain; sequence MWYLLNTGQA…FGRLDANAMV (323 aa). Residues Asp202 and His242 each act as charge relay system in the active site. 2 cysteine pairs are disulfide-bonded: Cys259/Cys411 and Cys351/Cys381. The Charge relay system role is filled by Ser419. A P/Homo B domain is found at 495–638; that stretch reads LPAQRKCTAA…EERVIDTQTK (144 aa). Cysteines 501 and 527 form a disulfide. The tract at residues 668–710 is disordered; the sequence is TIEGSTQDHVKPKEGAKEPWGNYRNTNNINNNSSTAFKRKKKQ. Over residues 673-684 the composition is skewed to basic and acidic residues; it reads TQDHVKPKEGAK. Residues 689–699 are compositionally biased toward low complexity; that stretch reads NYRNTNNINNN. Asn698 and Asn699 each carry an N-linked (GlcNAc...) asparagine glycan.

This sequence belongs to the peptidase S8 family. Furin subfamily. Predominantly in the body column.

Its function is as follows. Probably involved in the processing of hormone and other protein precursors at sites comprised of pairs of basic amino acid residues. This Hydra vulgaris (Hydra) protein is PC3-like endoprotease variant B.